We begin with the raw amino-acid sequence, 676 residues long: XK-related protein 5 (676 aa).

7 helical membrane passes run 37–57 (WLAL…FLWF), 114–134 (LLEA…VFLA), 140–160 (IVPG…LVSY), 206–226 (VWVL…LVAQ), 239–259 (LFNL…WDSP), 266–286 (SFYL…TDFL), and 294–314 (LWTV…LVIY). 4 disordered regions span residues 336–362 (PIED…DSSS), 372–391 (TSLD…GLGE), 495–538 (LEDN…KEGQ), and 598–661 (PIPG…IQRD). Polar residues predominate over residues 498-509 (NATTQKPPATQE).

Belongs to the XK family.

The protein resides in the cell membrane. This chain is XK-related protein 5, found in Mus musculus (Mouse).